The following is a 169-amino-acid chain: Ribosome maturation factor RimM (169 aa).

The 73-residue stretch at 97 to 169 folds into the PRC barrel domain; sequence EDEVYFKDLI…KIVVDWEYDY (73 aa).

It belongs to the RimM family. In terms of assembly, binds ribosomal protein uS19.

Its subcellular location is the cytoplasm. In terms of biological role, an accessory protein needed during the final step in the assembly of 30S ribosomal subunit, possibly for assembly of the head region. Essential for efficient processing of 16S rRNA. May be needed both before and after RbfA during the maturation of 16S rRNA. It has affinity for free ribosomal 30S subunits but not for 70S ribosomes. In Francisella tularensis subsp. tularensis (strain WY96-3418), this protein is Ribosome maturation factor RimM.